Consider the following 767-residue polypeptide: Protein ROLLING AND ERECT LEAF 2 (767 aa).

3 disordered regions span residues 1 to 20, 78 to 187, and 201 to 309; these read MGCTASKVEQEDTVRRCKER, PALA…SEFF, and RELE…SSTV. Pro residues-rich tracts occupy residues 81 to 90 and 110 to 126; these read APTPTPPPPS and APPPPPPTQSHQPPPPV. The segment covering 145–155 has biased composition (low complexity); it reads SDSSVASPARS. Residues 201–210 are compositionally biased toward basic and acidic residues; the sequence is RELEEEEKAR. Residues 221–232 are compositionally biased toward acidic residues; it reads EDEVDDDDDERE. Over residues 255–264 the composition is skewed to basic and acidic residues; it reads TRSEEGEMGN.

In terms of tissue distribution, highly expressed in young leaves and panicles. Expressed at low levels in roots.

The protein localises to the cell membrane. Involved in the regulation of leaf shape formation. May function by coordinating the expression of genes associated with leaf and bulliform cell development. The polypeptide is Protein ROLLING AND ERECT LEAF 2 (Oryza sativa subsp. japonica (Rice)).